Here is a 416-residue protein sequence, read N- to C-terminus: Keratin, type I cuticular Ha1 (416 aa).

The tract at residues 1-56 is head; the sequence is MPYNFCLPSLSCRTSCSSRPCVPPSCHSCTLPGACNIPANVSNCNWFCEGSFNGSE. In terms of domain architecture, IF rod spans 56-367; the sequence is EKETMQFLND…SLLESEDCNL (312 aa). The coil 1A stretch occupies residues 57 to 91; the sequence is KETMQFLNDRLASYLEKVRQLERDNAELENLIRER. The linker 1 stretch occupies residues 92-102; it reads SQQQEPLLCPS. Positions 103–203 are coil 1B; sequence YQSYFKTIEE…HEQEVNTLRC (101 aa). Positions 204–219 are linker 12; it reads QLGDRLNVEVDAAPTV. The segment at 220-363 is coil 2; it reads DLNRVLNETR…NTYRSLLESE (144 aa). Residues 364-416 form a tail region; it reads DCNLPSNPCATTNACSKPIGPCLSNPCTSCVPPAPCTPCAPRPRCGPCNSFVR.

The protein belongs to the intermediate filament family. In terms of tissue distribution, present in scalp but not in hairless skin. Abundantly expressed in the differentiating cortex of growing (anagen) hair. Expression is restricted to the keratinocytes of the hair cortex and is absent from inner root sheath and medulla.

The chain is Keratin, type I cuticular Ha1 (KRT31) from Homo sapiens (Human).